The following is a 355-amino-acid chain: UDP-N-acetylglucosamine--N-acetylmuramyl-(pentapeptide) pyrophosphoryl-undecaprenol N-acetylglucosamine transferase (355 aa).

Residues 13–15 (TGG), Asn-125, Arg-162, Ser-190, Ile-244, and Gln-289 each bind UDP-N-acetyl-alpha-D-glucosamine.

The protein belongs to the glycosyltransferase 28 family. MurG subfamily.

It localises to the cell inner membrane. The enzyme catalyses di-trans,octa-cis-undecaprenyl diphospho-N-acetyl-alpha-D-muramoyl-L-alanyl-D-glutamyl-meso-2,6-diaminopimeloyl-D-alanyl-D-alanine + UDP-N-acetyl-alpha-D-glucosamine = di-trans,octa-cis-undecaprenyl diphospho-[N-acetyl-alpha-D-glucosaminyl-(1-&gt;4)]-N-acetyl-alpha-D-muramoyl-L-alanyl-D-glutamyl-meso-2,6-diaminopimeloyl-D-alanyl-D-alanine + UDP + H(+). Its pathway is cell wall biogenesis; peptidoglycan biosynthesis. In terms of biological role, cell wall formation. Catalyzes the transfer of a GlcNAc subunit on undecaprenyl-pyrophosphoryl-MurNAc-pentapeptide (lipid intermediate I) to form undecaprenyl-pyrophosphoryl-MurNAc-(pentapeptide)GlcNAc (lipid intermediate II). The protein is UDP-N-acetylglucosamine--N-acetylmuramyl-(pentapeptide) pyrophosphoryl-undecaprenol N-acetylglucosamine transferase of Neisseria meningitidis serogroup B (strain ATCC BAA-335 / MC58).